The chain runs to 292 residues: Ribosomal protein L11 methyltransferase (292 aa).

The S-adenosyl-L-methionine site is built by T144, G165, D187, and N229.

The protein belongs to the methyltransferase superfamily. PrmA family.

It is found in the cytoplasm. It catalyses the reaction L-lysyl-[protein] + 3 S-adenosyl-L-methionine = N(6),N(6),N(6)-trimethyl-L-lysyl-[protein] + 3 S-adenosyl-L-homocysteine + 3 H(+). Functionally, methylates ribosomal protein L11. This chain is Ribosomal protein L11 methyltransferase, found in Pseudomonas putida (strain GB-1).